The following is a 612-amino-acid chain: Lipoma-preferred partner (612 aa).

Disordered regions lie at residues 1–118 (MSHP…SSLD) and 132–219 (ECSS…SSRP). Positions 26–40 (THSFGNPSISVSTQQ) are enriched in polar residues. The span at 41 to 53 (PPKKFAPVVAPKP) shows a compositional bias: low complexity. N6-acetyllysine is present on Lys-108. Phosphoserine is present on residues Ser-116 and Ser-151. Composition is skewed to polar residues over residues 143-158 (QSSTGSTASPPVSTPV) and 171-181 (PLTATKKSTLK). Pro residues predominate over residues 183–193 (QPAPQAGPIPV). The segment covering 209-219 (SYTTASTSSRP) has biased composition (polar residues). Residues Tyr-244 and Tyr-301 each carry the phosphotyrosine modification. Residues 307 to 387 (YGGRNDSDPT…LGPSSVAPSF (81 aa)) form a disordered region. A compositionally biased stretch (polar residues) spans 314-323 (DPTYGQQGHP). Lys-327 is covalently cross-linked (Glycyl lysine isopeptide (Lys-Gly) (interchain with G-Cter in SUMO1)). Thr-333 carries the post-translational modification Phosphothreonine. Ser-375 carries the phosphoserine modification. 3 LIM zinc-binding domains span residues 414 to 473 (GRCA…INTL), 474 to 534 (EQCN…KFAP), and 535 to 603 (RCSV…RIRV).

It belongs to the zyxin/ajuba family. In terms of assembly, interacts with VASP, with PDZ domains of SCRIB and with ACTN1/alpha-actinin. As to expression, expressed in a wide variety of tissues but no or very low expression in brain and peripheral leukocytes.

It localises to the nucleus. Its subcellular location is the cytoplasm. It is found in the cell junction. The protein resides in the cell membrane. In terms of biological role, may play a structural role at sites of cell adhesion in maintaining cell shape and motility. In addition to these structural functions, it may also be implicated in signaling events and activation of gene transcription. May be involved in signal transduction from cell adhesion sites to the nucleus allowing successful integration of signals arising from soluble factors and cell-cell adhesion sites. Also suggested to serve as a scaffold protein upon which distinct protein complexes are assembled in the cytoplasm and in the nucleus. This is Lipoma-preferred partner (LPP) from Homo sapiens (Human).